Here is a 115-residue protein sequence, read N- to C-terminus: U3-lycotoxin-Ls1l (115 aa).

The first 20 residues, 1 to 20, serve as a signal peptide directing secretion; it reads MKFVLLFGVLLVTLFSYSSA. Residues 21–44 constitute a propeptide that is removed on maturation; it reads EMLDDFDQADEDELLSLIEKEEAR. 3 cysteine pairs are disulfide-bonded: C55–C72, C62–C87, and C74–C85.

This sequence belongs to the neurotoxin 19 (CSTX) family. 01 subfamily. Expressed by the venom gland.

The protein resides in the secreted. The chain is U3-lycotoxin-Ls1l from Lycosa singoriensis (Wolf spider).